A 589-amino-acid polypeptide reads, in one-letter code: Protein MICRORCHIDIA 3 (589 aa).

The interval 1 to 33 (MAPESKNAGVSVVVNLDSDSDSDNDDGVGGRGA) is disordered. A coiled-coil region spans residues 542–589 (MRCEEYVKKETELEQTVSNLAKELEETKSKCARLALLVDAKRREMQQV).

It belongs to the MORC ATPase protein family. Homodimer and heterodimer. Component of an RNA-directed DNA methylation (RdDM) complex. Mg(2+) is required as a cofactor. It depends on Mn(2+) as a cofactor.

It is found in the nucleus. In terms of biological role, exhibits ATPase activity. Binds DNA/RNA in a non-specific manner and exhibits endonuclease activity. Probably involved in DNA repair. Involved in RNA-directed DNA methylation (RdDM) as a component of the RdDM machinery and required for gene silencing. May also be involved in the regulation of chromatin architecture to maintain gene silencing. This chain is Protein MICRORCHIDIA 3, found in Arabidopsis thaliana (Mouse-ear cress).